A 422-amino-acid chain; its full sequence is 4-hydroxy-3-methylbut-2-en-1-yl diphosphate synthase (flavodoxin) (422 aa).

[4Fe-4S] cluster is bound by residues cysteine 316, cysteine 319, cysteine 362, and glutamate 369.

It belongs to the IspG family. The cofactor is [4Fe-4S] cluster.

The enzyme catalyses (2E)-4-hydroxy-3-methylbut-2-enyl diphosphate + oxidized [flavodoxin] + H2O + 2 H(+) = 2-C-methyl-D-erythritol 2,4-cyclic diphosphate + reduced [flavodoxin]. It participates in isoprenoid biosynthesis; isopentenyl diphosphate biosynthesis via DXP pathway; isopentenyl diphosphate from 1-deoxy-D-xylulose 5-phosphate: step 5/6. Converts 2C-methyl-D-erythritol 2,4-cyclodiphosphate (ME-2,4cPP) into 1-hydroxy-2-methyl-2-(E)-butenyl 4-diphosphate. The sequence is that of 4-hydroxy-3-methylbut-2-en-1-yl diphosphate synthase (flavodoxin) from Anaplasma marginale (strain St. Maries).